The following is a 742-amino-acid chain: Collectin-12 (742 aa).

The Cytoplasmic segment spans residues 1–37; that stretch reads MKDDFAEEEEVQSFGYKRFGIQEGTQCTKCKNNWALK. A helical; Signal-anchor for type II membrane protein membrane pass occupies residues 38-58; sequence FSIVLLYILCALLTITVAILG. The Extracellular segment spans residues 59 to 742; it reads YKVVEKMDNV…EREAVPSSIL (684 aa). A glycan (N-linked (GlcNAc...) asparagine) is linked at Asn-67. The stretch at 73–142 forms a coiled coil; it reads ETSHQTYDNK…KDTLEKLQAN (70 aa). 2 N-linked (GlcNAc...) asparagine glycosylation sites follow: Asn-159 and Asn-168. Residues 205 to 254 are a coiled coil; the sequence is NLNNLNLTQVQQRNLISNLQQSVDDTSLAIQRIKNDFQNLQQVFLQAKKD. Asn-271 is a glycosylation site (N-linked (GlcNAc...) asparagine). The interval 439-608 is disordered; it reads TILQGPPGPR…TPASEVNGCP (170 aa). Collagen-like domains lie at 452–511 and 527–586; these read GDRG…KGSR and GPPG…PGPS. The segment covering 501 to 514 has biased composition (low complexity); that stretch reads SKGSQGPKGSRGSP. Over residues 516 to 532 the composition is skewed to pro residues; it reads KPGPQGPSGDPGPPGPP. The span at 534 to 556 shows a compositional bias: low complexity; sequence KDGLPGPQGPPGFQGLQGTVGEP. The segment covering 571–585 has biased composition (pro residues); that stretch reads PGMPGPKGPPGPPGP. 3 disulfide bridges follow: Cys-607–Cys-618, Cys-635–Cys-730, and Cys-708–Cys-722. In terms of domain architecture, C-type lectin spans 614–731; sequence FTDKCYYFSL…CDEINNFICE (118 aa). Ca(2+)-binding residues include Phe-644, Asn-646, Glu-650, Asp-670, and Glu-674. Lys-691, Gln-694, and Asp-696 together coordinate a carbohydrate. Ca(2+) is bound by residues Gln-694, Asp-696, Asn-697, Glu-706, Asp-707, Asn-718, Asp-719, and Glu-731. Glu-706 serves as a coordination point for a carbohydrate. A carbohydrate contacts are provided by Asn-718 and Asp-719.

As to quaternary structure, the extracellular domain forms a stable trimer. The extracellular domain interacts with fibrillar amyloid-beta peptide. As to expression, expressed in vascular endothelial cells in the heart, in perivascular macrophage and smooth muscle cells. Expressed in plaques-surrounding reactive astrocytes located in cerebral cortex and hippocampus and in leptomeningeal vessels showing characteristics of cerebral amyloid angiopathy (CAA) in a double transgenic mouse model of Alzheimer disease (at protein level). Strongly expressed in lung. Moderately expressed in heart, skeletal muscle, spleen, liver, brain, colon, testis, stomach and kidney. Expressed in neonatal astrocytes. Expressed in reactive astrocytes and vascular/perivascular cells in the brain of a double transgenic mouse model of Alzheimer disease.

The protein localises to the membrane. In terms of biological role, scavenger receptor that displays several functions associated with host defense. Promotes binding and phagocytosis of Gram-positive, Gram-negative bacteria and yeast. Also binds to sialyl Lewis X or a trisaccharide and asialo-orosomucoid (ASOR). Mediates the recognition, internalization and degradation of oxidatively modified low density lipoprotein (oxLDL) by vascular endothelial cells. Binds to several carbohydrates including Gal-type ligands, D-galactose, L- and D-fucose, GalNAc, T and Tn antigens in a calcium-dependent manner and internalizes specifically GalNAc in nurse-like cells. This is Collectin-12 (Colec12) from Mus musculus (Mouse).